The following is a 218-amino-acid chain: Large ribosomal subunit protein bL25 (218 aa).

The tract at residues 178-218 is disordered; that stretch reads VTPPTVTEDPDATEEDNTTAESVEATGERNDDNLDRPGRVE. The segment covering 185–195 has biased composition (acidic residues); it reads EDPDATEEDNT. A compositionally biased stretch (basic and acidic residues) spans 203–218; sequence TGERNDDNLDRPGRVE.

It belongs to the bacterial ribosomal protein bL25 family. CTC subfamily. Part of the 50S ribosomal subunit; part of the 5S rRNA/L5/L18/L25 subcomplex. Contacts the 5S rRNA. Binds to the 5S rRNA independently of L5 and L18.

This is one of the proteins that binds to the 5S RNA in the ribosome where it forms part of the central protuberance. The sequence is that of Large ribosomal subunit protein bL25 from Shouchella clausii (strain KSM-K16) (Alkalihalobacillus clausii).